Reading from the N-terminus, the 450-residue chain is 23S rRNA (uracil(1939)-C(5))-methyltransferase RlmD (450 aa).

The TRAM domain maps to 12–70 (SKQLSAKLSLNVDQLDHLGAGIAQYQGKVVFIPGALPDETVTVQLTEQKKNYARAKLIK). Residues C83, C89, C92, and C171 each contribute to the [4Fe-4S] cluster site. S-adenosyl-L-methionine contacts are provided by Q283, F312, N317, E333, D360, and D380. The active-site Nucleophile is C406.

The protein belongs to the class I-like SAM-binding methyltransferase superfamily. RNA M5U methyltransferase family. RlmD subfamily.

The enzyme catalyses uridine(1939) in 23S rRNA + S-adenosyl-L-methionine = 5-methyluridine(1939) in 23S rRNA + S-adenosyl-L-homocysteine + H(+). In terms of biological role, catalyzes the formation of 5-methyl-uridine at position 1939 (m5U1939) in 23S rRNA. The sequence is that of 23S rRNA (uracil(1939)-C(5))-methyltransferase RlmD from Shewanella sp. (strain W3-18-1).